The following is a 288-amino-acid chain: Probable chromosome 1-partitioning protein ParB (288 aa).

This sequence belongs to the ParB family.

Involved in chromosome partition. Localize to both poles of the predivisional cell following completion of DNA replication. Binds to the DNA origin of replication. In Deinococcus radiodurans (strain ATCC 13939 / DSM 20539 / JCM 16871 / CCUG 27074 / LMG 4051 / NBRC 15346 / NCIMB 9279 / VKM B-1422 / R1), this protein is Probable chromosome 1-partitioning protein ParB (parB1).